Reading from the N-terminus, the 299-residue chain is Acetylglutamate kinase (299 aa).

Residues 72 to 73 (GG), Arg-94, and Asn-196 contribute to the substrate site.

It belongs to the acetylglutamate kinase family. ArgB subfamily.

The protein localises to the cytoplasm. It carries out the reaction N-acetyl-L-glutamate + ATP = N-acetyl-L-glutamyl 5-phosphate + ADP. It participates in amino-acid biosynthesis; L-arginine biosynthesis; N(2)-acetyl-L-ornithine from L-glutamate: step 2/4. Its function is as follows. Catalyzes the ATP-dependent phosphorylation of N-acetyl-L-glutamate. This Paraburkholderia phymatum (strain DSM 17167 / CIP 108236 / LMG 21445 / STM815) (Burkholderia phymatum) protein is Acetylglutamate kinase.